Consider the following 216-residue polypeptide: Octanoyltransferase (216 aa).

In terms of domain architecture, BPL/LPL catalytic spans 31-205 (STTRDEVWLV…ELVTLLDYEQ (175 aa)). Substrate is bound by residues 70–77 (RGGQVTYH), 137–139 (SLG), and 150–152 (GLA). Cys-168 serves as the catalytic Acyl-thioester intermediate.

Belongs to the LipB family.

It localises to the cytoplasm. It catalyses the reaction octanoyl-[ACP] + L-lysyl-[protein] = N(6)-octanoyl-L-lysyl-[protein] + holo-[ACP] + H(+). It participates in protein modification; protein lipoylation via endogenous pathway; protein N(6)-(lipoyl)lysine from octanoyl-[acyl-carrier-protein]: step 1/2. In terms of biological role, catalyzes the transfer of endogenously produced octanoic acid from octanoyl-acyl-carrier-protein onto the lipoyl domains of lipoate-dependent enzymes. Lipoyl-ACP can also act as a substrate although octanoyl-ACP is likely to be the physiological substrate. The protein is Octanoyltransferase of Vibrio cholerae serotype O1 (strain ATCC 39541 / Classical Ogawa 395 / O395).